Consider the following 476-residue polypeptide: Bifunctional protein HldE (476 aa).

Positions 1 to 318 (MKPVLPDYSK…AEAVHGSKDT (318 aa)) are ribokinase. 195–198 (NMSE) is a binding site for ATP. Asp-264 is an active-site residue. A cytidylyltransferase region spans residues 344–476 (MTNGCFDILH…IIEAIKGGRG (133 aa)).

It in the N-terminal section; belongs to the carbohydrate kinase PfkB family. In the C-terminal section; belongs to the cytidylyltransferase family. Homodimer.

The catalysed reaction is D-glycero-beta-D-manno-heptose 7-phosphate + ATP = D-glycero-beta-D-manno-heptose 1,7-bisphosphate + ADP + H(+). It carries out the reaction D-glycero-beta-D-manno-heptose 1-phosphate + ATP + H(+) = ADP-D-glycero-beta-D-manno-heptose + diphosphate. It functions in the pathway nucleotide-sugar biosynthesis; ADP-L-glycero-beta-D-manno-heptose biosynthesis; ADP-L-glycero-beta-D-manno-heptose from D-glycero-beta-D-manno-heptose 7-phosphate: step 1/4. The protein operates within nucleotide-sugar biosynthesis; ADP-L-glycero-beta-D-manno-heptose biosynthesis; ADP-L-glycero-beta-D-manno-heptose from D-glycero-beta-D-manno-heptose 7-phosphate: step 3/4. Functionally, catalyzes the phosphorylation of D-glycero-D-manno-heptose 7-phosphate at the C-1 position to selectively form D-glycero-beta-D-manno-heptose-1,7-bisphosphate. Its function is as follows. Catalyzes the ADP transfer from ATP to D-glycero-beta-D-manno-heptose 1-phosphate, yielding ADP-D-glycero-beta-D-manno-heptose. The polypeptide is Bifunctional protein HldE (Vibrio cholerae serotype O1 (strain M66-2)).